The primary structure comprises 215 residues: FBD domain-containing protein At3g58975 (215 aa).

The FBD domain occupies 122 to 199 (RSLTSCPVKK…KLSSCNVQLL (78 aa)).

The sequence is that of FBD domain-containing protein At3g58975 from Arabidopsis thaliana (Mouse-ear cress).